Reading from the N-terminus, the 384-residue chain is NADH-quinone oxidoreductase subunit D 2 (384 aa).

This sequence belongs to the complex I 49 kDa subunit family. In terms of assembly, NDH-1 is composed of 14 different subunits. Subunits NuoB, C, D, E, F, and G constitute the peripheral sector of the complex.

It localises to the cell membrane. It catalyses the reaction a quinone + NADH + 5 H(+)(in) = a quinol + NAD(+) + 4 H(+)(out). In terms of biological role, NDH-1 shuttles electrons from NADH, via FMN and iron-sulfur (Fe-S) centers, to quinones in the respiratory chain. The immediate electron acceptor for the enzyme in this species is believed to be a menaquinone. Couples the redox reaction to proton translocation (for every two electrons transferred, four hydrogen ions are translocated across the cytoplasmic membrane), and thus conserves the redox energy in a proton gradient. In Symbiobacterium thermophilum (strain DSM 24528 / JCM 14929 / IAM 14863 / T), this protein is NADH-quinone oxidoreductase subunit D 2.